Here is a 338-residue protein sequence, read N- to C-terminus: Replication factor C small subunit (338 aa).

Position 53 to 60 (glycine 53 to threonine 60) interacts with ATP.

This sequence belongs to the activator 1 small subunits family. RfcS subfamily. In terms of assembly, heteromultimer composed of small subunits (RfcS) and large subunits (RfcL).

In terms of biological role, part of the RFC clamp loader complex which loads the PCNA sliding clamp onto DNA. The chain is Replication factor C small subunit from Methanosarcina acetivorans (strain ATCC 35395 / DSM 2834 / JCM 12185 / C2A).